Here is a 309-residue protein sequence, read N- to C-terminus: Lipoyl synthase (309 aa).

[4Fe-4S] cluster is bound by residues C37, C42, C48, C67, C71, C74, and S281. Residues 53–270 form the Radical SAM core domain; the sequence is DGPGTATFML…RVAETEFGFL (218 aa).

It belongs to the radical SAM superfamily. Lipoyl synthase family. [4Fe-4S] cluster is required as a cofactor.

It is found in the cytoplasm. It catalyses the reaction [[Fe-S] cluster scaffold protein carrying a second [4Fe-4S](2+) cluster] + N(6)-octanoyl-L-lysyl-[protein] + 2 oxidized [2Fe-2S]-[ferredoxin] + 2 S-adenosyl-L-methionine + 4 H(+) = [[Fe-S] cluster scaffold protein] + N(6)-[(R)-dihydrolipoyl]-L-lysyl-[protein] + 4 Fe(3+) + 2 hydrogen sulfide + 2 5'-deoxyadenosine + 2 L-methionine + 2 reduced [2Fe-2S]-[ferredoxin]. It functions in the pathway protein modification; protein lipoylation via endogenous pathway; protein N(6)-(lipoyl)lysine from octanoyl-[acyl-carrier-protein]: step 2/2. Its function is as follows. Catalyzes the radical-mediated insertion of two sulfur atoms into the C-6 and C-8 positions of the octanoyl moiety bound to the lipoyl domains of lipoate-dependent enzymes, thereby converting the octanoylated domains into lipoylated derivatives. The sequence is that of Lipoyl synthase from Natronomonas pharaonis (strain ATCC 35678 / DSM 2160 / CIP 103997 / JCM 8858 / NBRC 14720 / NCIMB 2260 / Gabara) (Halobacterium pharaonis).